The chain runs to 274 residues: Tropomyosin (274 aa).

Residues 1–30 (MKLEKDNAMDRADTLEQQNKEANIRAEKAE) form a disordered region. Positions 1 to 274 (MKLEKDNAMD…DQTFSELSGY (274 aa)) form a coiled coil.

The protein belongs to the tropomyosin family. Homodimer.

Its function is as follows. Tropomyosin, in association with the troponin complex, plays a central role in the calcium dependent regulation of muscle contraction. The polypeptide is Tropomyosin (Panulirus stimpsoni (Chinese spiny lobster)).